Consider the following 142-residue polypeptide: Large ribosomal subunit protein bL17 (142 aa).

This sequence belongs to the bacterial ribosomal protein bL17 family. Part of the 50S ribosomal subunit. Contacts protein L32.

The polypeptide is Large ribosomal subunit protein bL17 (Chlamydia caviae (strain ATCC VR-813 / DSM 19441 / 03DC25 / GPIC) (Chlamydophila caviae)).